The sequence spans 303 residues: N-acetyl-D-glucosamine kinase (303 aa).

ATP contacts are provided by residues 4 to 11 and 133 to 140; these read GFDIGGTK and GVGGGLVL. Residues His-157, Cys-177, Cys-179, and Cys-184 each contribute to the Zn(2+) site.

This sequence belongs to the ROK (NagC/XylR) family. NagK subfamily.

The enzyme catalyses N-acetyl-D-glucosamine + ATP = N-acetyl-D-glucosamine 6-phosphate + ADP + H(+). The protein operates within cell wall biogenesis; peptidoglycan recycling. Functionally, catalyzes the phosphorylation of N-acetyl-D-glucosamine (GlcNAc) derived from cell-wall degradation, yielding GlcNAc-6-P. The chain is N-acetyl-D-glucosamine kinase from Citrobacter koseri (strain ATCC BAA-895 / CDC 4225-83 / SGSC4696).